The chain runs to 417 residues: Gamma-glutamyl phosphate reductase (417 aa).

This sequence belongs to the gamma-glutamyl phosphate reductase family.

It localises to the cytoplasm. It carries out the reaction L-glutamate 5-semialdehyde + phosphate + NADP(+) = L-glutamyl 5-phosphate + NADPH + H(+). Its pathway is amino-acid biosynthesis; L-proline biosynthesis; L-glutamate 5-semialdehyde from L-glutamate: step 2/2. Functionally, catalyzes the NADPH-dependent reduction of L-glutamate 5-phosphate into L-glutamate 5-semialdehyde and phosphate. The product spontaneously undergoes cyclization to form 1-pyrroline-5-carboxylate. The sequence is that of Gamma-glutamyl phosphate reductase from Escherichia coli O127:H6 (strain E2348/69 / EPEC).